A 253-amino-acid polypeptide reads, in one-letter code: MKHIPRKRFGQHFLADQAIIDAIVRAIAPAPGQPMVEIGPGLAALTQPLVERLGRLTVVELDRDLAQRLRSHGQLDVIESDVLKVDFSAVAANLGAPRIRIVGNLPYNISTPILFHLLEHVGVVEDQHFMLQKEVIDRMVAQPATSDYGRLSVMLQWRYAMEDVLFVPPESFDPPPRVDSAVVRMVPHAAPAPVAPRLLEELVQVAFSQRRKLLRHTLGRWLEARQFTGTFDTQRRAEEVPVADYVALAQACA.

S-adenosyl-L-methionine is bound by residues His-12, Leu-14, Gly-39, Glu-60, Asp-81, and Asn-104.

The protein belongs to the class I-like SAM-binding methyltransferase superfamily. rRNA adenine N(6)-methyltransferase family. RsmA subfamily.

The protein resides in the cytoplasm. The catalysed reaction is adenosine(1518)/adenosine(1519) in 16S rRNA + 4 S-adenosyl-L-methionine = N(6)-dimethyladenosine(1518)/N(6)-dimethyladenosine(1519) in 16S rRNA + 4 S-adenosyl-L-homocysteine + 4 H(+). Functionally, specifically dimethylates two adjacent adenosines (A1518 and A1519) in the loop of a conserved hairpin near the 3'-end of 16S rRNA in the 30S particle. May play a critical role in biogenesis of 30S subunits. This chain is Ribosomal RNA small subunit methyltransferase A, found in Paracidovorax citrulli (strain AAC00-1) (Acidovorax citrulli).